The sequence spans 294 residues: Phosphate import ATP-binding protein PstB (294 aa).

The segment covering Met1–Asn18 has biased composition (polar residues). Residues Met1–Ser24 form a disordered region. One can recognise an ABC transporter domain in the interval Leu48–Ile289. Gly80–Ser87 provides a ligand contact to ATP.

The protein belongs to the ABC transporter superfamily. Phosphate importer (TC 3.A.1.7) family. In terms of assembly, the complex is composed of two ATP-binding proteins (PstB), two transmembrane proteins (PstC and PstA) and a solute-binding protein (PstS).

The protein resides in the cell inner membrane. It carries out the reaction phosphate(out) + ATP + H2O = ADP + 2 phosphate(in) + H(+). Part of the ABC transporter complex PstSACB involved in phosphate import. Responsible for energy coupling to the transport system. The chain is Phosphate import ATP-binding protein PstB from Hahella chejuensis (strain KCTC 2396).